The following is a 21-amino-acid chain: Venom peptide Ocy4 (21 aa).

As to expression, expressed by the venom gland.

It is found in the secreted. This chain is Venom peptide Ocy4, found in Opisthacanthus cayaporum (South American scorpion).